Reading from the N-terminus, the 509-residue chain is Activin receptor type-1 (509 aa).

The signal sequence occupies residues 1-20 (MVDGAMILSVLMMMALPSPS). Residues 21–123 (MEDEEPKVNP…FPGSQNFHLE (103 aa)) lie on the Extracellular side of the membrane. An N-linked (GlcNAc...) asparagine glycan is attached at asparagine 102. Residues 124 to 146 (VGLIILSVVFAVCLFACILGVAL) traverse the membrane as a helical segment. Residues 147–509 (RKFKRRNQER…NSLDKLKTDC (363 aa)) are Cytoplasmic-facing. The GS domain occupies 178-207 (STLAELLDHSCTSGSGSGLPFLVQRTVARQ). Residues 208–502 (ITLLECVGKG…KTLTKIDNSL (295 aa)) form the Protein kinase domain. ATP is bound by residues 214–222 (VGKGRYGEV) and lysine 235. Catalysis depends on aspartate 336, which acts as the Proton acceptor. Serine 501 bears the Phosphoserine mark.

Belongs to the protein kinase superfamily. TKL Ser/Thr protein kinase family. TGFB receptor subfamily. As to quaternary structure, interacts with FKBP1A. Interacts with FCHO1. Interacts with CLU. Interacts with type II receptors AMHR2 and ACVR2A. Interacts with BMP7. Interacts with GDF2/BMP9. Interacts with BMP6 (when glycosylated); the interaction may induce HAMP expression. Interacts with TSC22D1/TSC-22. Mg(2+) is required as a cofactor. It depends on Mn(2+) as a cofactor. In terms of tissue distribution, urogenital ridge, testis, ovary, brain and lungs.

It localises to the membrane. It catalyses the reaction L-threonyl-[receptor-protein] + ATP = O-phospho-L-threonyl-[receptor-protein] + ADP + H(+). The catalysed reaction is L-seryl-[receptor-protein] + ATP = O-phospho-L-seryl-[receptor-protein] + ADP + H(+). Its function is as follows. Bone morphogenetic protein (BMP) type I receptor that is involved in a wide variety of biological processes, including bone, heart, cartilage, nervous, and reproductive system development and regulation. As a type I receptor, forms heterotetrameric receptor complexes with the type II receptors AMHR2, ACVR2A ors ACVR2B. Upon binding of ligands such as BMP7 or GDF2/BMP9 to the heteromeric complexes, type II receptors transphosphorylate ACVR1 intracellular domain. In turn, ACVR1 kinase domain is activated and subsequently phosphorylates SMAD1/5/8 proteins that transduce the signal. In addition to its role in mediating BMP pathway-specific signaling, suppresses TGFbeta/activin pathway signaling by interfering with the binding of activin to its type II receptor. Besides canonical SMAD signaling, can activate non-canonical pathways such as p38 mitogen-activated protein kinases/MAPKs. May promote the expression of HAMP, potentially via its interaction with BMP6. In Rattus norvegicus (Rat), this protein is Activin receptor type-1 (Acvr1).